Consider the following 114-residue polypeptide: UPF0102 protein HPAG1_0809 (114 aa).

The protein belongs to the UPF0102 family.

This chain is UPF0102 protein HPAG1_0809, found in Helicobacter pylori (strain HPAG1).